The chain runs to 95 residues: FXYD domain-containing ion transport regulator 6 (95 aa).

Residues 1–18 form the signal peptide; it reads MELVLVFLCSLLAPTVLA. Residues 19–35 lie on the Extracellular side of the membrane; that stretch reads SAAEKEKEMDPFHYDYQ. Residues 36 to 58 form a helical membrane-spanning segment; it reads TLRIGGLVFAVVLFSVGILLILS. The Cytoplasmic segment spans residues 59 to 95; that stretch reads RRCKCSFNQKPRAPGDEEAQVENLITANATEPQKAEN.

This sequence belongs to the FXYD family. Regulatory subunit of the sodium/potassium-transporting ATPase which is composed of a catalytic alpha subunit, a non-catalytic beta subunit and an additional regulatory subunit. The regulatory subunit, a member of the FXYD protein family, modulates the enzymatic activity in a tissue- and isoform-specific way by changing affinities of the Na+/K+-ATPase toward Na(+), K(+) or ATP.

It localises to the cell membrane. Functionally, associates with and regulates the activity of the sodium/potassium-transporting ATPase (NKA) which catalyzes the hydrolysis of ATP coupled with the exchange of Na(+) and K(+) ions across the plasma membrane. Reduces the apparent affinity for intracellular Na(+) with no change in the apparent affinity for extracellular K(+). In addition to modulating NKA kinetics, may also function as a regulator of NKA localization to the plasma membrane. The chain is FXYD domain-containing ion transport regulator 6 (FXYD6) from Pongo abelii (Sumatran orangutan).